We begin with the raw amino-acid sequence, 62 residues long: MTIAFQLAVFALIATSSILLISVPVVFSSPDGWSSNKNVVFSGTSLWIGLVFLVGILNSLIS.

Transmembrane regions (helical) follow at residues 8-28 and 41-61; these read AVFA…VVFS and FSGT…NSLI.

The protein belongs to the PsbZ family. As to quaternary structure, PSII is composed of 1 copy each of membrane proteins PsbA, PsbB, PsbC, PsbD, PsbE, PsbF, PsbH, PsbI, PsbJ, PsbK, PsbL, PsbM, PsbT, PsbY, PsbZ, Psb30/Ycf12, at least 3 peripheral proteins of the oxygen-evolving complex and a large number of cofactors. It forms dimeric complexes.

The protein localises to the plastid. Its subcellular location is the chloroplast thylakoid membrane. Its function is as follows. May control the interaction of photosystem II (PSII) cores with the light-harvesting antenna, regulates electron flow through the 2 photosystem reaction centers. PSII is a light-driven water plastoquinone oxidoreductase, using light energy to abstract electrons from H(2)O, generating a proton gradient subsequently used for ATP formation. The protein is Photosystem II reaction center protein Z of Populus alba (White poplar).